We begin with the raw amino-acid sequence, 517 residues long: Golgi-associated kinase 1B (517 aa).

Topologically, residues 1 to 36 (MTCPDKPGQLVNWFVCSLCAPRVCKLWSSRRPRTRR) are cytoplasmic. Residues 37-56 (NLLLGTACAIYLGFLVSQVG) form a helical; Signal-anchor for type II membrane protein membrane-spanning segment. The Extracellular portion of the chain corresponds to 57-517 (RGSFQHGQAT…HGARVLPMNE (461 aa)). N-linked (GlcNAc...) asparagine glycans are attached at residues Asn-98 and Asn-287.

This sequence belongs to the GASK family.

It is found in the golgi apparatus membrane. The chain is Golgi-associated kinase 1B from Mus musculus (Mouse).